A 418-amino-acid chain; its full sequence is Torsin-4A-B (418 aa).

A helical transmembrane segment spans residues Cys128–Ile144. Gly200–Ser207 is an ATP binding site.

The protein belongs to the ClpA/ClpB family. Torsin subfamily.

It is found in the membrane. The chain is Torsin-4A-B (tor4a-b) from Xenopus laevis (African clawed frog).